A 645-amino-acid polypeptide reads, in one-letter code: Cysteine-rich receptor-like protein kinase 10 (645 aa).

The first 27 residues, 1–27 (MSMACYYLAAAAAGLALLLLHAPLTDA), serve as a signal peptide directing secretion. Gnk2-homologous domains are found at residues 28 to 132 (QTLV…NDAF) and 140 to 251 (SQGM…VYPF). Residues 28–283 (QTLVPLCGDS…AGERSKNKRS (256 aa)) are Extracellular-facing. Asn-39 and Asn-91 each carry an N-linked (GlcNAc...) asparagine glycan. 2 disulfide bridges follow: Cys-86–Cys-95 and Cys-98–Cys-123. N-linked (GlcNAc...) asparagine glycosylation is found at Asn-151 and Asn-169. 2 cysteine pairs are disulfide-bonded: Cys-204/Cys-213 and Cys-216/Cys-242. A helical membrane pass occupies residues 284–304 (AILAISMPTIALVLATIAAWF). At 305 to 645 (CSTSWRRRRL…WVQEIGATAS (341 aa)) the chain is on the cytoplasmic side. One can recognise a Protein kinase domain in the interval 348–619 (FSEHKRLGEG…PLMSAVNAML (272 aa)). Residues 354–362 (LGEGGFGVV) and Lys-376 each bind ATP. Asp-473 serves as the catalytic Proton acceptor.

Belongs to the protein kinase superfamily. Ser/Thr protein kinase family. CRK subfamily.

The protein localises to the membrane. Functionally, involved in disease resistance. Required for NPR1/NH1-mediated immunity to the bacterial blight pathogen Xanthomomas oryzae pv. oryzae (Xoo). Required for the benzothiadiazole (BTH)-induced immune response. Probably regulated by the transcription factor TGA2.1. This Oryza sativa subsp. japonica (Rice) protein is Cysteine-rich receptor-like protein kinase 10.